The sequence spans 319 residues: MTVSTTPKSQRNVARGVWELARLHTREAWLCWYPAIWGACVAAGMRDVSLELAPFLRLLFGIWASVTATHCAFCTFNDICDQKLDKHVERCKIRPLPSGMISTSEAVVAFICWLPVTLAITWGTLGPAVMAGFIPVWVLSTIYPFMKRIMPFPQVVLGAIIGGAVFPGWVGITGDLKDLDQALPLFFATASWVVYFDVFYATQDRPDDEKIGVKSLAVLLGKNVQILLAVLGALQVLLFAVTALRADMSLIFWVLGLGVWMVNVPWHILSLDLKDRHSGGRIFKSNIKLGLYLTGVSLLELFVVRVYDISLANMKMELH.

A run of 9 helical transmembrane segments spans residues 28 to 45 (AWLCWYPAIWGACVAAGM), 48 to 68 (VSLELAPFLRLLFGIWASVTA), 106 to 126 (AVVAFICWLPVTLAITWGTLG), 127 to 147 (PAVMAGFIPVWVLSTIYPFMK), 152 to 172 (FPQVVLGAIIGGAVFPGWVGI), 182 to 202 (ALPLFFATASWVVYFDVFYAT), 224 to 244 (VQILLAVLGALQVLLFAVTAL), 249 to 269 (SLIFWVLGLGVWMVNVPWHIL), and 289 to 309 (LGLYLTGVSLLELFVVRVYDI).

It belongs to the UbiA prenyltransferase family. It depends on Mg(2+) as a cofactor.

Its subcellular location is the membrane. It participates in secondary metabolite biosynthesis; terpenoid biosynthesis. Functionally, polyprenyl transferase; part of the gene cluster that mediates the biosynthesis of macrophorins, isoprenoid epoxycyclohexenones containing cyclized drimane moieties. The first step of the pathway is the synthesis of 6-methylsalicylic acid (6-MSA) by the polyketide synthase macA. 6-MSA is then converted to m-cresol by the decarboxylase macB. The cytochrome P450 monooxygenase macC then catalyzes the oxidation of m-cresol to toluquinol. Epoxidation of toluquinol is then performed by the short chain dehydrogenase macD, with the help of macE, and a further prenylation by macG leads to 7-deacetoxyyanuthone A. The next step is the hydroxylation of C-22 of 7-deacetoxyyanuthone A by the cytochrome P450 monooxygenase macH to yield 22-deacetylyanuthone A. O-Mevalon transferase macI then attaches mevalon to the hydroxyl group of 22-deacetylyanuthone A to produce yanuthone E. The terpene cyclase macJ catalyzes the cyclization of 22-deacetylyanuthone A to macrophorin A. MacJ is also able to catalyze cyclization of yanuthone E and 7-deacetoxyyanuthone A to their corresponding macrophorins. The macJ products can be further modified by macH and macJ, as well as by the FAD-dependent monooxygenase macF, to produce additional macrophorins, including 4'-oxomacrophorin A, 4'-oxomacrophorin D and 4'-oxomacrophorin E. The sequence is that of Polyprenyl transferase macG from Penicillium terrestre.